Consider the following 591-residue polypeptide: Asparagine synthetase [glutamine-hydrolyzing] 2 (591 aa).

Cysteine 2 functions as the For GATase activity in the catalytic mechanism. Residues cysteine 2 to glycine 185 enclose the Glutamine amidotransferase type-2 domain. L-glutamine contacts are provided by residues arginine 50–valine 54, asparagine 75–glutamate 77, and aspartate 98. The region spanning proline 193–proline 516 is the Asparagine synthetase domain. ATP is bound by residues leucine 231, isoleucine 267, and serine 341–glycine 342.

As to expression, expressed in companion cells of leaf sheath vascular bundles, and phloem-parenchyma cells, nucellar projections and nucellar epidermis of dorsal vascular bundles of grains.

It carries out the reaction L-aspartate + L-glutamine + ATP + H2O = L-asparagine + L-glutamate + AMP + diphosphate + H(+). It participates in amino-acid biosynthesis; L-asparagine biosynthesis; L-asparagine from L-aspartate (L-Gln route): step 1/1. Functionally, essential for nitrogen assimilation, distribution and remobilization within the plant via the phloem. The sequence is that of Asparagine synthetase [glutamine-hydrolyzing] 2 from Oryza sativa subsp. japonica (Rice).